A 274-amino-acid polypeptide reads, in one-letter code: Thiamine kinase (274 aa).

It belongs to the thiamine kinase family.

The enzyme catalyses thiamine + ATP = thiamine phosphate + ADP + H(+). Its pathway is cofactor biosynthesis; thiamine diphosphate biosynthesis; thiamine phosphate from thiamine: step 1/1. Catalyzes the ATP-dependent phosphorylation of thiamine to thiamine phosphate. Is involved in thiamine salvage. The chain is Thiamine kinase from Escherichia coli (strain K12 / MC4100 / BW2952).